The primary structure comprises 358 residues: 3-dehydroquinate synthase (358 aa).

NAD(+) contacts are provided by residues 69–74 (DGEAHK), 103–107 (GVIGD), 127–128 (TT), Lys140, Lys149, and 167–170 (CLRT). 3 residues coordinate Zn(2+): Glu182, His245, and His262.

It belongs to the sugar phosphate cyclases superfamily. Dehydroquinate synthase family. Co(2+) serves as cofactor. The cofactor is Zn(2+). It depends on NAD(+) as a cofactor.

It localises to the cytoplasm. The catalysed reaction is 7-phospho-2-dehydro-3-deoxy-D-arabino-heptonate = 3-dehydroquinate + phosphate. Its pathway is metabolic intermediate biosynthesis; chorismate biosynthesis; chorismate from D-erythrose 4-phosphate and phosphoenolpyruvate: step 2/7. Catalyzes the conversion of 3-deoxy-D-arabino-heptulosonate 7-phosphate (DAHP) to dehydroquinate (DHQ). In Tolumonas auensis (strain DSM 9187 / NBRC 110442 / TA 4), this protein is 3-dehydroquinate synthase.